We begin with the raw amino-acid sequence, 159 residues long: Transcription elongation factor GreA (159 aa).

A coiled-coil region spans residues 45–67 (NAEYHEARKEQSFVEGKIRELQL).

It belongs to the GreA/GreB family.

In terms of biological role, necessary for efficient RNA polymerase transcription elongation past template-encoded arresting sites. The arresting sites in DNA have the property of trapping a certain fraction of elongating RNA polymerases that pass through, resulting in locked ternary complexes. Cleavage of the nascent transcript by cleavage factors such as GreA or GreB allows the resumption of elongation from the new 3'terminus. GreA releases sequences of 2 to 3 nucleotides. This chain is Transcription elongation factor GreA, found in Neorickettsia sennetsu (strain ATCC VR-367 / Miyayama) (Ehrlichia sennetsu).